The chain runs to 498 residues: ATP synthase subunit beta, chloroplastic (498 aa).

172 to 179 (GGAGVGKT) serves as a coordination point for ATP.

Belongs to the ATPase alpha/beta chains family. In terms of assembly, F-type ATPases have 2 components, CF(1) - the catalytic core - and CF(0) - the membrane proton channel. CF(1) has five subunits: alpha(3), beta(3), gamma(1), delta(1), epsilon(1). CF(0) has four main subunits: a(1), b(1), b'(1) and c(9-12).

The protein localises to the plastid. It localises to the chloroplast thylakoid membrane. It carries out the reaction ATP + H2O + 4 H(+)(in) = ADP + phosphate + 5 H(+)(out). Functionally, produces ATP from ADP in the presence of a proton gradient across the membrane. The catalytic sites are hosted primarily by the beta subunits. In Atropa belladonna (Belladonna), this protein is ATP synthase subunit beta, chloroplastic.